The primary structure comprises 456 residues: Signal recognition particle 54 kDa protein (456 aa).

GTP-binding positions include 104–111 (GLYGNGKT), 184–188 (DTSGR), and 242–245 (TKMD).

It belongs to the GTP-binding SRP family. SRP54 subfamily. As to quaternary structure, part of the signal recognition particle protein translocation system, which is composed of SRP and FtsY. Archaeal SRP consists of a 7S RNA molecule of 300 nucleotides and two protein subunits: SRP54 and SRP19.

Its subcellular location is the cytoplasm. The catalysed reaction is GTP + H2O = GDP + phosphate + H(+). Functionally, involved in targeting and insertion of nascent membrane proteins into the cytoplasmic membrane. Binds to the hydrophobic signal sequence of the ribosome-nascent chain (RNC) as it emerges from the ribosomes. The SRP-RNC complex is then targeted to the cytoplasmic membrane where it interacts with the SRP receptor FtsY. The sequence is that of Signal recognition particle 54 kDa protein from Thermoplasma acidophilum (strain ATCC 25905 / DSM 1728 / JCM 9062 / NBRC 15155 / AMRC-C165).